A 264-amino-acid chain; its full sequence is Indole-3-glycerol phosphate synthase (264 aa).

It belongs to the TrpC family.

It carries out the reaction 1-(2-carboxyphenylamino)-1-deoxy-D-ribulose 5-phosphate + H(+) = (1S,2R)-1-C-(indol-3-yl)glycerol 3-phosphate + CO2 + H2O. It functions in the pathway amino-acid biosynthesis; L-tryptophan biosynthesis; L-tryptophan from chorismate: step 4/5. The protein is Indole-3-glycerol phosphate synthase of Albidiferax ferrireducens (strain ATCC BAA-621 / DSM 15236 / T118) (Rhodoferax ferrireducens).